The sequence spans 441 residues: Malate dehydrogenase [NADP], chloroplastic (441 aa).

The N-terminal 58 residues, 1–58, are a transit peptide targeting the chloroplast; the sequence is MALTQLNSTCSKPQLHSSSQLSFLSRTRTRTLPRHYHSTFAPLHRTQHARISCSVAPN. A disulfide bridge links C76 with C81. 105–111 is an NADP(+) binding site; it reads GAAGMIS. The substrate site is built by R186 and R192. Residue N199 participates in NADP(+) binding. NAD(+) is bound at residue Q206. 223-225 contacts NADP(+); that stretch reads VGN. Residues N225 and R256 each coordinate substrate. H281 (proton acceptor) is an active-site residue. The cysteines at positions 417 and 429 are disulfide-linked.

This sequence belongs to the LDH/MDH superfamily. MDH type 2 family. In terms of assembly, homodimer.

Its subcellular location is the plastid. It is found in the chloroplast. It carries out the reaction (S)-malate + NADP(+) = oxaloacetate + NADPH + H(+). Chloroplast NADP-MDH is activated upon illumination. In order to be enzymatically active, disulfide bridges on the protein must be reduced by thioredoxin which receives electrons from ferredoxin and the electron transport system of photosynthesis. Functionally, the chloroplastic, NADP-dependent form is essential for the photosynthesis C4 cycle, which allows plants to circumvent the problem of photorespiration. In C4 plants, NADP-MDH activity acts to convert oxaloacetate to malate in chloroplasts of mesophyll cells for transport to the bundle sheath cells. This Pisum sativum (Garden pea) protein is Malate dehydrogenase [NADP], chloroplastic.